The sequence spans 195 residues: Small ribosomal subunit protein uS4c (195 aa).

One can recognise an S4 RNA-binding domain in the interval 82 to 143 (MRLDNILFRL…KQRSKALIQN (62 aa)).

This sequence belongs to the universal ribosomal protein uS4 family. In terms of assembly, part of the 30S ribosomal subunit. Contacts protein S5. The interaction surface between S4 and S5 is involved in control of translational fidelity.

It is found in the plastid. The protein localises to the chloroplast. In terms of biological role, one of the primary rRNA binding proteins, it binds directly to 16S rRNA where it nucleates assembly of the body of the 30S subunit. Functionally, with S5 and S12 plays an important role in translational accuracy. The protein is Small ribosomal subunit protein uS4c (rps4) of Watsonia angusta.